The primary structure comprises 145 residues: SsrA-binding protein (145 aa).

The protein belongs to the SmpB family.

Its subcellular location is the cytoplasm. In terms of biological role, required for rescue of stalled ribosomes mediated by trans-translation. Binds to transfer-messenger RNA (tmRNA), required for stable association of tmRNA with ribosomes. tmRNA and SmpB together mimic tRNA shape, replacing the anticodon stem-loop with SmpB. tmRNA is encoded by the ssrA gene; the 2 termini fold to resemble tRNA(Ala) and it encodes a 'tag peptide', a short internal open reading frame. During trans-translation Ala-aminoacylated tmRNA acts like a tRNA, entering the A-site of stalled ribosomes, displacing the stalled mRNA. The ribosome then switches to translate the ORF on the tmRNA; the nascent peptide is terminated with the 'tag peptide' encoded by the tmRNA and targeted for degradation. The ribosome is freed to recommence translation, which seems to be the essential function of trans-translation. The polypeptide is SsrA-binding protein (Mesomycoplasma hyopneumoniae (strain 232) (Mycoplasma hyopneumoniae)).